The primary structure comprises 85 residues: Large ribosomal subunit protein bL27 (85 aa).

Belongs to the bacterial ribosomal protein bL27 family.

The protein is Large ribosomal subunit protein bL27 of Xylella fastidiosa (strain 9a5c).